The primary structure comprises 421 residues: Glucan 1,3-beta-glucosidase (421 aa).

The N-terminal stretch at 1–15 (MKLTKLVALAGAALA) is a signal peptide. Catalysis depends on Glu-213, which acts as the Proton donor. 2 cysteine pairs are disulfide-bonded: Cys-296/Cys-419 and Cys-321/Cys-347. Glu-313 acts as the Nucleophile in catalysis.

It belongs to the glycosyl hydrolase 5 (cellulase A) family.

Its subcellular location is the secreted. It carries out the reaction Successive hydrolysis of beta-D-glucose units from the non-reducing ends of (1-&gt;3)-beta-D-glucans, releasing alpha-glucose.. This is Glucan 1,3-beta-glucosidase (EXG1) from Yarrowia lipolytica (strain CLIB 122 / E 150) (Yeast).